The chain runs to 324 residues: Putative GTPase PYRAB02490 (324 aa).

Residues 52-60 (GPPGAGKST), aspartate 194, and 229-231 (VAT) contribute to the GTP site.

It belongs to the SIMIBI class G3E GTPase family. ArgK/MeaB subfamily.

May have GTPase activity. May also bind and hydrolyze ATP. May function as chaperone. The polypeptide is Putative GTPase PYRAB02490 (Pyrococcus abyssi (strain GE5 / Orsay)).